We begin with the raw amino-acid sequence, 212 residues long: uncharacterized protein (212 aa).

Over residues 87–105 the composition is skewed to low complexity; sequence NNNNNNNNNNNHNHNNSNN. Positions 87-107 are disordered; it reads NNNNNNNNNNNHNHNNSNNTA.

This is an uncharacterized protein from Saccharomyces cerevisiae (strain ATCC 204508 / S288c) (Baker's yeast).